The primary structure comprises 175 residues: Large ribosomal subunit protein uL6 (175 aa).

It belongs to the universal ribosomal protein uL6 family. As to quaternary structure, part of the 50S ribosomal subunit.

Its function is as follows. This protein binds to the 23S rRNA, and is important in its secondary structure. It is located near the subunit interface in the base of the L7/L12 stalk, and near the tRNA binding site of the peptidyltransferase center. This is Large ribosomal subunit protein uL6 from Xanthomonas oryzae pv. oryzae (strain MAFF 311018).